Here is a 415-residue protein sequence, read N- to C-terminus: Peptide chain release factor subunit 1-1 (415 aa).

Belongs to the eukaryotic release factor 1 family. Heterodimer of two subunits, one of which binds GTP.

Its subcellular location is the cytoplasm. Functionally, directs the termination of nascent peptide synthesis (translation) in response to the termination codons UAA, UAG and UGA. The protein is Peptide chain release factor subunit 1-1 of Methanosarcina acetivorans (strain ATCC 35395 / DSM 2834 / JCM 12185 / C2A).